The primary structure comprises 519 residues: Aldehyde dehydrogenase X, mitochondrial (519 aa).

The transit peptide at 1–19 directs the protein to the mitochondrion; it reads MLTARLLLPRLLCLQGRTT. K53 carries the N6-acetyllysine modification. K54 is modified (N6-acetyllysine; alternate). The residue at position 54 (K54) is an N6-succinyllysine; alternate. An N6-succinyllysine modification is found at K83. 264–269 provides a ligand contact to NAD(+); the sequence is GSTEVG. E287 (proton acceptor) is an active-site residue. The active-site Nucleophile is the C321. N6-acetyllysine; alternate is present on residues K366, K385, K401, K416, and K428. Residues K366, K385, K401, K416, and K428 each carry the N6-succinyllysine; alternate modification. The residue at position 431 (K431) is an N6-acetyllysine.

The protein belongs to the aldehyde dehydrogenase family. Homotetramer.

It is found in the mitochondrion matrix. It carries out the reaction an aldehyde + NAD(+) + H2O = a carboxylate + NADH + 2 H(+). Its pathway is alcohol metabolism; ethanol degradation; acetate from ethanol: step 2/2. ALDHs play a major role in the detoxification of alcohol-derived acetaldehyde. They are involved in the metabolism of corticosteroids, biogenic amines, neurotransmitters, and lipid peroxidation. The polypeptide is Aldehyde dehydrogenase X, mitochondrial (Aldh1b1) (Mus musculus (Mouse)).